The sequence spans 150 residues: D-aminoacyl-tRNA deacylase (150 aa).

The Gly-cisPro motif, important for rejection of L-amino acids signature appears at 136 to 137 (GP).

This sequence belongs to the DTD family. Homodimer.

Its subcellular location is the cytoplasm. It carries out the reaction glycyl-tRNA(Ala) + H2O = tRNA(Ala) + glycine + H(+). The enzyme catalyses a D-aminoacyl-tRNA + H2O = a tRNA + a D-alpha-amino acid + H(+). An aminoacyl-tRNA editing enzyme that deacylates mischarged D-aminoacyl-tRNAs. Also deacylates mischarged glycyl-tRNA(Ala), protecting cells against glycine mischarging by AlaRS. Acts via tRNA-based rather than protein-based catalysis; rejects L-amino acids rather than detecting D-amino acids in the active site. By recycling D-aminoacyl-tRNA to D-amino acids and free tRNA molecules, this enzyme counteracts the toxicity associated with the formation of D-aminoacyl-tRNA entities in vivo and helps enforce protein L-homochirality. The chain is D-aminoacyl-tRNA deacylase from Staphylococcus carnosus (strain TM300).